Reading from the N-terminus, the 316-residue chain is ATP synthase gamma chain (316 aa).

The protein belongs to the ATPase gamma chain family. F-type ATPases have 2 components, CF(1) - the catalytic core - and CF(0) - the membrane proton channel. CF(1) has five subunits: alpha(3), beta(3), gamma(1), delta(1), epsilon(1). CF(0) has three main subunits: a, b and c.

The protein resides in the cellular thylakoid membrane. Produces ATP from ADP in the presence of a proton gradient across the membrane. The gamma chain is believed to be important in regulating ATPase activity and the flow of protons through the CF(0) complex. This chain is ATP synthase gamma chain, found in Prochlorococcus marinus (strain MIT 9301).